The following is a 336-amino-acid chain: N-lysine methyltransferase KMT5A (336 aa).

The segment at Met-1–Cys-112 is disordered. Positions Ser-67–Arg-93 are enriched in basic and acidic residues. The SET domain occupies Glu-200 to Gly-321. Residues Lys-210 to Arg-212, Tyr-255, and Asn-282 to His-283 contribute to the S-adenosyl-L-methionine site.

It belongs to the class V-like SAM-binding methyltransferase superfamily. Histone-lysine methyltransferase family. PR/SET subfamily.

Its subcellular location is the nucleus. It localises to the chromosome. The catalysed reaction is L-lysyl(20)-[histone H4] + S-adenosyl-L-methionine = N(6)-methyl-L-lysyl(20)-[histone H4] + S-adenosyl-L-homocysteine + H(+). It carries out the reaction L-lysyl-[protein] + S-adenosyl-L-methionine = N(6)-methyl-L-lysyl-[protein] + S-adenosyl-L-homocysteine + H(+). Its function is as follows. Protein-lysine N-methyltransferase that monomethylates both histones and non-histone proteins. Specifically monomethylates 'Lys-20' of histone H4 (H4K20me1). H4K20me1 is enriched during mitosis and represents a specific tag for epigenetic transcriptional repression. Mainly functions in euchromatin regions, thereby playing a central role in the silencing of euchromatic genes. Required for cell proliferation, probably by contributing to the maintenance of proper higher-order structure of DNA during mitosis. Involved in chromosome condensation and proper cytokinesis. Nucleosomes are preferred as substrate compared to free histones. Mediates monomethylation of p53/TP53 at 'Lys-382', leading to repress p53/TP53-target genes. Plays a negative role in TGF-beta response regulation and a positive role in cell migration. The chain is N-lysine methyltransferase KMT5A from Xenopus tropicalis (Western clawed frog).